The following is a 621-amino-acid chain: Intermediate filament protein ifc-2 (621 aa).

Residues 20–55 (SGAYTSGFGGLVSGMSSAGAICTTQIRDAREREKRE) are head. The IF rod domain occupies 52–400 (EKREIGLLND…VLLNGANVTT (349 aa)). Residues 56–87 (IGLLNDRLADYIEKVRFLEAQNQCLSHDIDIL) form a coil 1A region. The segment at 88 to 100 (RRGFSGGGHVSGL) is linker 1. Positions 101–238 (YDTEIAQAKR…TENSTRIEQE (138 aa)) are coil 1B. Positions 239-256 (LVFIRRDTTAENRDYFRH) are linker 12. Positions 257 to 400 (ELQAAIRDIR…VLLNGANVTT (144 aa)) are coil 2. Residues 401 to 549 (YVSNTHPSGV…RVDVGGFRVE (149 aa)) form a tail region. The 114-residue stretch at 508-621 (SGRSFHSWYL…EERAWFVYLN (114 aa)) folds into the LTD domain.

The protein belongs to the intermediate filament family.

Its subcellular location is the cytoplasm. Its function is as follows. Cytoplasmic intermediate filaments provide mechanical strength to cells. The protein is Intermediate filament protein ifc-2 of Caenorhabditis briggsae.